Consider the following 267-residue polypeptide: Type II pantothenate kinase (267 aa).

6-13 serves as a coordination point for ATP; it reads DAGGTLIK. The active-site Proton acceptor is the E70. ATP is bound by residues T99, 121 to 125, Y137, and S225; that span reads GGMIQ.

Belongs to the type II pantothenate kinase family. Homodimer.

It is found in the cytoplasm. The enzyme catalyses (R)-pantothenate + ATP = (R)-4'-phosphopantothenate + ADP + H(+). It participates in cofactor biosynthesis; coenzyme A biosynthesis; CoA from (R)-pantothenate: step 1/5. Functionally, catalyzes the phosphorylation of pantothenate (Pan), the first step in CoA biosynthesis. The polypeptide is Type II pantothenate kinase (Staphylococcus aureus (strain bovine RF122 / ET3-1)).